The chain runs to 199 residues: MKFSPLLDELIQSLRCLPGVGPKSAQRMAFQLLERDRKAGLKLASALSSAMSDVGHCQSCRTYTEETLCPICASHKRGSSSTICVVETPADVLAIEAGGHFTGRYFVLLGHLSPLDGVGPEELGLALLERHLASGDVSELILATNPTVEGEATAHFIADMARRHKVMISRIAHGVPVGGELEYVDSTTLALSFNGRLPL.

The C4-type zinc finger occupies 57–72 (CQSCRTYTEETLCPIC). Positions 81–176 (STICVVETPA…MISRIAHGVP (96 aa)) constitute a Toprim domain.

The protein belongs to the RecR family.

Functionally, may play a role in DNA repair. It seems to be involved in an RecBC-independent recombinational process of DNA repair. It may act with RecF and RecO. The polypeptide is Recombination protein RecR (Shewanella putrefaciens (strain CN-32 / ATCC BAA-453)).